The chain runs to 356 residues: Protein-glutamate methylesterase/protein-glutamine glutaminase 3 (356 aa).

One can recognise a Response regulatory domain in the interval Lys3–Arg120. Asp54 carries the 4-aspartylphosphate modification. A CheB-type methylesterase domain is found at Asn165 to Gln356. Catalysis depends on residues Ser177, His203, and Asp299.

Belongs to the CheB family. Post-translationally, phosphorylated by CheA. Phosphorylation of the N-terminal regulatory domain activates the methylesterase activity.

The protein resides in the cytoplasm. The enzyme catalyses [protein]-L-glutamate 5-O-methyl ester + H2O = L-glutamyl-[protein] + methanol + H(+). It catalyses the reaction L-glutaminyl-[protein] + H2O = L-glutamyl-[protein] + NH4(+). In terms of biological role, involved in chemotaxis. Part of a chemotaxis signal transduction system that modulates chemotaxis in response to various stimuli. Catalyzes the demethylation of specific methylglutamate residues introduced into the chemoreceptors (methyl-accepting chemotaxis proteins or MCP) by CheR. Also mediates the irreversible deamidation of specific glutamine residues to glutamic acid. This Shewanella oneidensis (strain ATCC 700550 / JCM 31522 / CIP 106686 / LMG 19005 / NCIMB 14063 / MR-1) protein is Protein-glutamate methylesterase/protein-glutamine glutaminase 3.